The chain runs to 144 residues: Putative pre-16S rRNA nuclease (144 aa).

Belongs to the YqgF nuclease family.

Its subcellular location is the cytoplasm. In terms of biological role, could be a nuclease involved in processing of the 5'-end of pre-16S rRNA. The chain is Putative pre-16S rRNA nuclease from Ralstonia nicotianae (strain ATCC BAA-1114 / GMI1000) (Ralstonia solanacearum).